The sequence spans 612 residues: Replication protein E1 (612 aa).

The Nuclear localization signal motif lies at 74-76 (KRK). Phosphoserine; by host occurs at positions 80 and 95. A Nuclear export signal motif is present at residues 94-103 (ISPRLETISI). Positions 148-315 (HTGEVGAAGV…TLINHQLDSE (168 aa)) are DNA-binding region. Residues 414–564 (VEFISFMIAF…FPFKDNGDPG (151 aa)) enclose the SF3 helicase domain. ATP is bound at residue 440–447 (GPPNTGKS). K521 is covalently cross-linked (Glycyl lysine isopeptide (Lys-Gly) (interchain with G-Cter in SUMO)). The disordered stretch occupies residues 587–612 (DQEDEGNDGKPQQSLRLTARAANEPI).

It belongs to the papillomaviridae E1 protein family. Can form hexamers. Interacts with E2 protein; this interaction increases E1 DNA binding specificity. Interacts with host DNA polymerase subunit POLA2. Interacts with host single stranded DNA-binding protein RPA1. Interacts with host TOP1; this interaction stimulates the enzymatic activity of TOP1. Phosphorylated. Post-translationally, sumoylated.

The protein localises to the host nucleus. It carries out the reaction Couples ATP hydrolysis with the unwinding of duplex DNA by translocating in the 3'-5' direction.. The enzyme catalyses ATP + H2O = ADP + phosphate + H(+). Functionally, ATP-dependent DNA 3'-5' helicase required for initiation of viral DNA replication. It forms a complex with the viral E2 protein. The E1-E2 complex binds to the replication origin which contains binding sites for both proteins. During the initial step, a dimer of E1 interacts with a dimer of protein E2 leading to a complex that binds the viral origin of replication with high specificity. Then, a second dimer of E1 displaces the E2 dimer in an ATP-dependent manner to form the E1 tetramer. Following this, two E1 monomers are added to each half of the site, which results in the formation of two E1 trimers on the viral ori. Subsequently, two hexamers will be created. The double hexamer acts as a bi-directional helicase machinery and unwinds the viral DNA and then recruits the host DNA polymerase to start replication. The sequence is that of Replication protein E1 from Homo sapiens (Human).